We begin with the raw amino-acid sequence, 252 residues long: Hydroxyacylglutathione hydrolase (252 aa).

His54, His56, Asp58, His59, His113, Asp132, and His170 together coordinate Zn(2+).

The protein belongs to the metallo-beta-lactamase superfamily. Glyoxalase II family. Monomer. Requires Zn(2+) as cofactor.

The catalysed reaction is an S-(2-hydroxyacyl)glutathione + H2O = a 2-hydroxy carboxylate + glutathione + H(+). The protein operates within secondary metabolite metabolism; methylglyoxal degradation; (R)-lactate from methylglyoxal: step 2/2. Thiolesterase that catalyzes the hydrolysis of S-D-lactoyl-glutathione to form glutathione and D-lactic acid. In Synechococcus sp. (strain JA-3-3Ab) (Cyanobacteria bacterium Yellowstone A-Prime), this protein is Hydroxyacylglutathione hydrolase.